Here is a 338-residue protein sequence, read N- to C-terminus: Large ribosomal subunit protein uL3 (338 aa).

Residues 230–258 (HRKGHRRTGTIGPQAPAVMFTQPRPGQMG) form a disordered region.

It belongs to the universal ribosomal protein uL3 family. As to quaternary structure, part of the 50S ribosomal subunit. Forms a cluster with proteins L14 and L24e.

Its function is as follows. One of the primary rRNA binding proteins, it binds directly near the 3'-end of the 23S rRNA, where it nucleates assembly of the 50S subunit. The protein is Large ribosomal subunit protein uL3 of Pyrobaculum aerophilum (strain ATCC 51768 / DSM 7523 / JCM 9630 / CIP 104966 / NBRC 100827 / IM2).